Here is a 326-residue protein sequence, read N- to C-terminus: tRNA-dihydrouridine(20a/20b) synthase [NAD(P)+] (326 aa).

FMN-binding positions include 26–28 and Gln79; that span reads PMV. Cys108 acts as the Proton donor in catalysis. Residues Lys149, His177, 208–210, and 232–233 contribute to the FMN site; these read NGD and AR.

It belongs to the Dus family. Dus4 subfamily. FMN is required as a cofactor.

It is found in the mitochondrion. It carries out the reaction 5,6-dihydrouridine(20a) in tRNA + NADP(+) = uridine(20a) in tRNA + NADPH + H(+). The enzyme catalyses 5,6-dihydrouridine(20a) in tRNA + NAD(+) = uridine(20a) in tRNA + NADH + H(+). The catalysed reaction is 5,6-dihydrouridine(20b) in tRNA + NAD(+) = uridine(20b) in tRNA + NADH + H(+). It catalyses the reaction 5,6-dihydrouridine(20b) in tRNA + NADP(+) = uridine(20b) in tRNA + NADPH + H(+). It carries out the reaction a 5,6-dihydrouridine in mRNA + NAD(+) = a uridine in mRNA + NADH + H(+). The enzyme catalyses a 5,6-dihydrouridine in mRNA + NADP(+) = a uridine in mRNA + NADPH + H(+). In terms of biological role, catalyzes the synthesis of dihydrouridine, a modified base found in the D-loop of most tRNAs. Also able to mediate dihydrouridylation of some mRNAs, thereby affecting their translation. The sequence is that of tRNA-dihydrouridine(20a/20b) synthase [NAD(P)+] from Schizosaccharomyces pombe (strain 972 / ATCC 24843) (Fission yeast).